The primary structure comprises 154 residues: Ribonuclease H (154 aa).

Positions 1–142 constitute an RNase H type-1 domain; that stretch reads MTKQVEIFTD…CDELAREGAN (142 aa). Residues Asp10, Glu48, Asp70, and Asp134 each contribute to the Mg(2+) site.

The protein belongs to the RNase H family. In terms of assembly, monomer. Mg(2+) is required as a cofactor.

The protein localises to the cytoplasm. It carries out the reaction Endonucleolytic cleavage to 5'-phosphomonoester.. Functionally, endonuclease that specifically degrades the RNA of RNA-DNA hybrids. The sequence is that of Ribonuclease H from Yersinia enterocolitica serotype O:8 / biotype 1B (strain NCTC 13174 / 8081).